A 351-amino-acid chain; its full sequence is Renin receptor (351 aa).

Residues Met-1–Gly-17 form the signal peptide. The Extracellular portion of the chain corresponds to Asn-18–Glu-303. Residues Tyr-304 to Val-324 traverse the membrane as a helical segment. The Cytoplasmic segment spans residues Thr-325–Asp-351. The Mediates retrograde transport to the ER signature appears at Lys-347–Asp-351.

As to quaternary structure, interacts with renin. Accessory component of the multisubunit proton-transporting vacuolar (V)-ATPase protein pump. Interacts (via N-terminus) with ATP6AP1 (via N-terminus). Interacts with ATP6V0D1; ATP6V0D1 is a V-ATPase complex subunit and the interaction promotes V-ATPase complex assembly. Interacts with TMEM9; TMEM9 is a V-ATPase assembly regulator and the interaction induces the interaction with ATP6V0D1. Interacts with VMA21 (via N-terminus); VMA21 is a V-ATPase accessory component. In terms of processing, phosphorylated. Post-translationally, proteolytically cleaved by a furin-like convertase in the trans-Golgi network to generate N- and C-terminal fragments. Expressed in the brain.

It is found in the endoplasmic reticulum membrane. The protein resides in the lysosome membrane. It localises to the cytoplasmic vesicle. The protein localises to the autophagosome membrane. Its subcellular location is the cell projection. It is found in the dendritic spine membrane. The protein resides in the axon. It localises to the endosome membrane. The protein localises to the clathrin-coated vesicle membrane. Its subcellular location is the secretory vesicle. It is found in the synaptic vesicle membrane. In terms of biological role, multifunctional protein which functions as a renin, prorenin cellular receptor and is involved in the assembly of the lysosomal proton-transporting V-type ATPase (V-ATPase) and the acidification of the endo-lysosomal system. May mediate renin-dependent cellular responses by activating ERK1 and ERK2. By increasing the catalytic efficiency of renin in AGT/angiotensinogen conversion to angiotensin I, may also play a role in the renin-angiotensin system (RAS). Through its function in V-type ATPase (v-ATPase) assembly and acidification of the lysosome it regulates protein degradation and may control different signaling pathways important for proper brain development, synapse morphology and synaptic transmission. This is Renin receptor (ATP6AP2) from Bos taurus (Bovine).